The primary structure comprises 931 residues: Bifunctional glutamine synthetase adenylyltransferase/adenylyl-removing enzyme (931 aa).

An adenylyl removase region spans residues 1-434 (MTLAPADLPV…STEFAALLAP (434 aa)). The segment at 441–931 (PDALANYWRS…ACRAAELPFA (491 aa)) is adenylyl transferase.

This sequence belongs to the GlnE family. Requires Mg(2+) as cofactor.

It carries out the reaction [glutamine synthetase]-O(4)-(5'-adenylyl)-L-tyrosine + phosphate = [glutamine synthetase]-L-tyrosine + ADP. The enzyme catalyses [glutamine synthetase]-L-tyrosine + ATP = [glutamine synthetase]-O(4)-(5'-adenylyl)-L-tyrosine + diphosphate. Involved in the regulation of glutamine synthetase GlnA, a key enzyme in the process to assimilate ammonia. When cellular nitrogen levels are high, the C-terminal adenylyl transferase (AT) inactivates GlnA by covalent transfer of an adenylyl group from ATP to specific tyrosine residue of GlnA, thus reducing its activity. Conversely, when nitrogen levels are low, the N-terminal adenylyl removase (AR) activates GlnA by removing the adenylyl group by phosphorolysis, increasing its activity. The regulatory region of GlnE binds the signal transduction protein PII (GlnB) which indicates the nitrogen status of the cell. This is Bifunctional glutamine synthetase adenylyltransferase/adenylyl-removing enzyme from Stenotrophomonas maltophilia (strain K279a).